A 312-amino-acid chain; its full sequence is Bark storage protein A (312 aa).

The signal sequence occupies residues 1–24 (MPQQSMQASLIDPIAEIERSNCKI). N-linked (GlcNAc...) asparagine glycosylation occurs at Asn-70.

This sequence to wound-inducible poplar endochitinases. As to quaternary structure, monomer. In terms of tissue distribution, bark.

In terms of biological role, may play a role in nitrogen storage. This chain is Bark storage protein A (BSPA), found in Populus deltoides (Eastern poplar).